The chain runs to 100 residues: Urease subunit gamma (100 aa).

It belongs to the urease gamma subunit family. In terms of assembly, heterotrimer of UreA (gamma), UreB (beta) and UreC (alpha) subunits. Three heterotrimers associate to form the active enzyme.

Its subcellular location is the cytoplasm. It carries out the reaction urea + 2 H2O + H(+) = hydrogencarbonate + 2 NH4(+). The protein operates within nitrogen metabolism; urea degradation; CO(2) and NH(3) from urea (urease route): step 1/1. The chain is Urease subunit gamma from Proteus hauseri.